A 302-amino-acid polypeptide reads, in one-letter code: Plant UBX domain-containing protein 3 (302 aa).

2 disordered regions span residues 1–64 (MSSK…PKHD) and 79–98 (VEGPLEHPSSSRSFTGTGRL). Positions 113-177 (PVIHNIIFWS…NLMRRDEKCP (65 aa)) constitute an SEP domain. One can recognise a UBX domain in the interval 224-301 (ETLPSTSIQL…GLASSVVIQK (78 aa)).

Interacts with CDC48A.

The protein is Plant UBX domain-containing protein 3 of Arabidopsis thaliana (Mouse-ear cress).